Here is a 389-residue protein sequence, read N- to C-terminus: 1-deoxy-D-xylulose 5-phosphate reductoisomerase (389 aa).

The NADPH site is built by Ser11, Gly12, Ser13, Val14, Asn39, and Asn122. Lys123 serves as a coordination point for 1-deoxy-D-xylulose 5-phosphate. Glu124 lines the NADPH pocket. Asp148 serves as a coordination point for Mn(2+). Positions 149, 150, 174, and 197 each coordinate 1-deoxy-D-xylulose 5-phosphate. A Mn(2+)-binding site is contributed by Glu150. An NADPH-binding site is contributed by Gly203. Ser210, Asn215, Lys216, and Glu219 together coordinate 1-deoxy-D-xylulose 5-phosphate. Glu219 contributes to the Mn(2+) binding site.

The protein belongs to the DXR family. The cofactor is Mg(2+). It depends on Mn(2+) as a cofactor.

The catalysed reaction is 2-C-methyl-D-erythritol 4-phosphate + NADP(+) = 1-deoxy-D-xylulose 5-phosphate + NADPH + H(+). Its pathway is isoprenoid biosynthesis; isopentenyl diphosphate biosynthesis via DXP pathway; isopentenyl diphosphate from 1-deoxy-D-xylulose 5-phosphate: step 1/6. Its function is as follows. Catalyzes the NADPH-dependent rearrangement and reduction of 1-deoxy-D-xylulose-5-phosphate (DXP) to 2-C-methyl-D-erythritol 4-phosphate (MEP). The protein is 1-deoxy-D-xylulose 5-phosphate reductoisomerase of Leptospira borgpetersenii serovar Hardjo-bovis (strain JB197).